Reading from the N-terminus, the 560-residue chain is Phenylalanine--tRNA ligase beta subunit (560 aa).

The B5 domain occupies 279–354; it reads LTPKEFEVDL…IAYGYNNIEP (76 aa). Asp-332, Asp-338, Glu-341, and Asp-342 together coordinate Mg(2+).

It belongs to the phenylalanyl-tRNA synthetase beta subunit family. Type 2 subfamily. Tetramer of two alpha and two beta subunits. Mg(2+) is required as a cofactor.

Its subcellular location is the cytoplasm. It catalyses the reaction tRNA(Phe) + L-phenylalanine + ATP = L-phenylalanyl-tRNA(Phe) + AMP + diphosphate + H(+). The protein is Phenylalanine--tRNA ligase beta subunit of Thermococcus sibiricus (strain DSM 12597 / MM 739).